The following is a 247-amino-acid chain: Germin-like protein 9-1 (247 aa).

Residues 1 to 25 (MMMSSRSSVSLGVLLLLAVILSAGA) form the signal peptide. The Cupin type-1 domain occupies 53-201 (KNLVTGNSGD…SMHTDQATVD (149 aa)). Residues His-100, His-102, and Glu-107 each contribute to the Mn(2+) site. An N-linked (GlcNAc...) asparagine glycan is attached at Asn-126. Residue His-148 participates in Mn(2+) binding. Asn-153 is a glycosylation site (N-linked (GlcNAc...) asparagine).

This sequence belongs to the germin family. As to quaternary structure, oligomer (believed to be a pentamer but probably hexamer).

The protein resides in the secreted. Its subcellular location is the extracellular space. It is found in the apoplast. In terms of biological role, may play a role in plant defense. Probably has no oxalate oxidase activity even if the active site is conserved. The polypeptide is Germin-like protein 9-1 (Oryza sativa subsp. japonica (Rice)).